Consider the following 334-residue polypeptide: Beta-glucanase (334 aa).

Residues 1–27 (MKNRVISLLMASLLLVLSVIVAPFYKA) form the signal peptide. The GH16 domain occupies 28 to 248 (EAATVVNTPF…YVKYYPNGVP (221 aa)). Glutamate 136 functions as the Nucleophile in the catalytic mechanism. Catalysis depends on glutamate 140, which acts as the Proton donor. A disordered region spans residues 246–265 (GVPQDNPTPTPTIAPSTPTN). The Dockerin domain occupies 267–334 (NLPLKGDVNG…RYLIRAIPSL (68 aa)).

Belongs to the glycosyl hydrolase 16 family.

It carries out the reaction Hydrolysis of (1-&gt;4)-beta-D-glucosidic linkages in beta-D-glucans containing (1-&gt;3)- and (1-&gt;4)-bonds.. The chain is Beta-glucanase (licB) from Acetivibrio thermocellus (Hungateiclostridium thermocellum).